The following is a 974-amino-acid chain: Valine--tRNA ligase, chloroplastic/mitochondrial 2 (974 aa).

A 'HIGH' region motif is present at residues 109–119; sequence PNVTGSLHMGH. Residues 432–454 form an LRR 1 repeat; it reads LAEKALLAVENKELTIIPERFEK. The stretch at 489–518 forms a coiled coil; sequence EEDYIVAKSAEEALEKALEKYGKDVEIYQD. The 'KMSKS' region motif lies at 598 to 602; sequence KMSKS. Residue K601 participates in ATP binding. Residues 857–880 form an LRR 2 repeat; the sequence is LALLSRLDLNNVHFSNAPPGDANL.

Belongs to the class-I aminoacyl-tRNA synthetase family.

It localises to the plastid. The protein localises to the chloroplast. It is found in the mitochondrion. The catalysed reaction is tRNA(Val) + L-valine + ATP = L-valyl-tRNA(Val) + AMP + diphosphate. The protein is Valine--tRNA ligase, chloroplastic/mitochondrial 2 of Arabidopsis thaliana (Mouse-ear cress).